The following is a 21-amino-acid chain: thr operon leader peptide (21 aa).

Belongs to the thr operon leader peptide family.

Its function is as follows. This protein is involved in control of the biosynthesis of threonine. The polypeptide is thr operon leader peptide (Shigella boydii serotype 18 (strain CDC 3083-94 / BS512)).